A 587-amino-acid polypeptide reads, in one-letter code: Arginine--tRNA ligase (587 aa).

Positions 127-137 match the 'HIGH' region motif; it reads PNLAKEMHVGH.

This sequence belongs to the class-I aminoacyl-tRNA synthetase family. In terms of assembly, monomer.

It localises to the cytoplasm. It carries out the reaction tRNA(Arg) + L-arginine + ATP = L-arginyl-tRNA(Arg) + AMP + diphosphate. The chain is Arginine--tRNA ligase from Pseudomonas aeruginosa (strain LESB58).